A 326-amino-acid chain; its full sequence is Glycerol-3-phosphate dehydrogenase [NAD(P)+] (326 aa).

Positions 10, 11, 31, and 108 each coordinate NADPH. 3 residues coordinate sn-glycerol 3-phosphate: lysine 108, glycine 136, and serine 138. Alanine 140 contacts NADPH. Positions 191, 246, 256, 257, and 258 each coordinate sn-glycerol 3-phosphate. Residue lysine 191 is the Proton acceptor of the active site. Residue arginine 257 participates in NADPH binding. NADPH is bound by residues isoleucine 281 and glutamate 283.

This sequence belongs to the NAD-dependent glycerol-3-phosphate dehydrogenase family.

The protein localises to the cytoplasm. The catalysed reaction is sn-glycerol 3-phosphate + NAD(+) = dihydroxyacetone phosphate + NADH + H(+). It carries out the reaction sn-glycerol 3-phosphate + NADP(+) = dihydroxyacetone phosphate + NADPH + H(+). Its pathway is membrane lipid metabolism; glycerophospholipid metabolism. Its function is as follows. Catalyzes the reduction of the glycolytic intermediate dihydroxyacetone phosphate (DHAP) to sn-glycerol 3-phosphate (G3P), the key precursor for phospholipid synthesis. The polypeptide is Glycerol-3-phosphate dehydrogenase [NAD(P)+] (Ehrlichia chaffeensis (strain ATCC CRL-10679 / Arkansas)).